A 53-amino-acid chain; its full sequence is MRVQLHCIARIHVVYLKEVDLLASLTVQSSSRRAPFLLGPQRQNVGLPPTVHH.

This sequence belongs to the ycf15 family.

The protein resides in the plastid. It localises to the chloroplast. This is an uncharacterized protein from Helianthus annuus (Common sunflower).